The chain runs to 474 residues: Polyamine oxidase 7 (474 aa).

Positions 1-27 (MTKPTTMAIFLSIVLLSMAQLPSLVAG) are cleaved as a signal peptide. Residues E61 and R69 each coordinate FAD. N-linked (GlcNAc...) asparagine glycans are attached at residues N103 and N150. V261 is a binding site for FAD. The N-linked (GlcNAc...) asparagine glycan is linked to N278. E454 contributes to the FAD binding site.

It belongs to the flavin monoamine oxidase family. Requires FAD as cofactor.

The protein resides in the secreted. Its subcellular location is the extracellular space. The protein localises to the apoplast. The catalysed reaction is spermine + O2 + H2O = 3-aminopropanal + spermidine + H2O2. It catalyses the reaction N(1)-acetylspermine + O2 + H2O = 3-acetamidopropanal + spermidine + H2O2. It carries out the reaction norspermine + O2 + H2O = norspermidine + 3-aminopropanal + H2O2. The enzyme catalyses spermidine + O2 + H2O = 3-aminopropanal + putrescine + H2O2. The catalysed reaction is N(1)-acetylspermidine + O2 + H2O = 3-acetamidopropanal + putrescine + H2O2. It catalyses the reaction thermospermine + O2 + H2O = 3-aminopropanal + spermidine + H2O2. It functions in the pathway amine and polyamine degradation; spermidine degradation. The protein operates within amine and polyamine degradation; spermine degradation. Flavoenzyme involved in polyamine back-conversion. Catalyzes the oxidation of the secondary amino group of polyamines, such as spermine, spermidine and their acetyl derivatives. Substrate preference is spermine &gt; spermidine &gt; N(1)-acetylspermine &gt; N(1)-acetylspermidine &gt; norspermine &gt; thermospermine. No activity detected when putrescine is used as substrate. May play a role in producing hydrogen peroxide for secondary wall thickening through lignin formation during anther development. In Oryza sativa subsp. japonica (Rice), this protein is Polyamine oxidase 7.